A 514-amino-acid chain; its full sequence is MRFKLDGRIIFSKDVEEETQKDIVEVLENRDIFLKGVPEGKENEASKIETYEFDGKDLKLKMTSGTYTRAHEGIVRLKKPIMEKVGRKHQIGIRDVAIDKYIVTLTAEPSKVSELKGLKVPECEVELESEKINIVFENLGDGELKRNIIDRAIKFVKNELDKQDQDLTFEVCKIAPGTIVSDYKAKREITFDTDPTELAEPYGWVKRFPGRGQWFYTAPMAKLFRAFESIIIEECIDKIGFDECLFPKLIPLDVMYKMRYLEGLPEGMYYVCPPKREPEMFQDFVNEMMIKKEIPIEKLKTLLRDPAYVLAPAQCEPFYTFFDHELVDVDHPSKFFDKSGWTYRWEGGGAKGLDRVNEFLRGECVWMGTPEFVEKVRDDTLKYAEKLAEKLDLEYWTEVGDDPFYLEGRKSEARGIEFPDVPKYEMRLWLPHVKEERKGVAVTSANIHGTHFVEGFGIKDYKERKVWTGCTGYGLTRWVIGFLAQYGYNYDDWPELIQKKVGKLPEIPKVITWP.

Ala313 is an L-serine binding site. Residue Cys315 coordinates Zn(2+). An L-serine-binding site is contributed by Arg344. ATP is bound by residues 344 to 346 and 355 to 356; these read RWE and RV. 361 to 363 provides a ligand contact to L-serine; that stretch reads RGE. Zn(2+) contacts are provided by Glu363 and Cys470. Position 477 (Arg477) interacts with ATP.

This sequence belongs to the class-II aminoacyl-tRNA synthetase family. Type-2 seryl-tRNA synthetase subfamily. In terms of assembly, homodimer. The cofactor is Zn(2+).

The protein localises to the cytoplasm. The enzyme catalyses tRNA(Ser) + L-serine + ATP = L-seryl-tRNA(Ser) + AMP + diphosphate + H(+). It carries out the reaction tRNA(Sec) + L-serine + ATP = L-seryl-tRNA(Sec) + AMP + diphosphate + H(+). It functions in the pathway aminoacyl-tRNA biosynthesis; selenocysteinyl-tRNA(Sec) biosynthesis; L-seryl-tRNA(Sec) from L-serine and tRNA(Sec): step 1/1. Catalyzes the attachment of serine to tRNA(Ser). Is also able to aminoacylate tRNA(Sec) with serine, to form the misacylated tRNA L-seryl-tRNA(Sec), which will be further converted into selenocysteinyl-tRNA(Sec). This is Type-2 serine--tRNA ligase from Methanococcus maripaludis (strain C5 / ATCC BAA-1333).